Reading from the N-terminus, the 264-residue chain is Thymidylate synthase (264 aa).

Arg21 serves as a coordination point for dUMP. His51 is a (6R)-5,10-methylene-5,6,7,8-tetrahydrofolate binding site. 126 to 127 (RR) lines the dUMP pocket. Cys146 serves as the catalytic Nucleophile. DUMP-binding positions include 166-169 (RSCD), Asn177, and 207-209 (HLY). Residue Asp169 coordinates (6R)-5,10-methylene-5,6,7,8-tetrahydrofolate. Ala263 serves as a coordination point for (6R)-5,10-methylene-5,6,7,8-tetrahydrofolate.

This sequence belongs to the thymidylate synthase family. Bacterial-type ThyA subfamily. As to quaternary structure, homodimer.

It localises to the cytoplasm. It catalyses the reaction dUMP + (6R)-5,10-methylene-5,6,7,8-tetrahydrofolate = 7,8-dihydrofolate + dTMP. It participates in pyrimidine metabolism; dTTP biosynthesis. Functionally, catalyzes the reductive methylation of 2'-deoxyuridine-5'-monophosphate (dUMP) to 2'-deoxythymidine-5'-monophosphate (dTMP) while utilizing 5,10-methylenetetrahydrofolate (mTHF) as the methyl donor and reductant in the reaction, yielding dihydrofolate (DHF) as a by-product. This enzymatic reaction provides an intracellular de novo source of dTMP, an essential precursor for DNA biosynthesis. This is Thymidylate synthase from Aeromonas salmonicida (strain A449).